Here is a 306-residue protein sequence, read N- to C-terminus: Aspartate carbamoyltransferase catalytic subunit (306 aa).

Carbamoyl phosphate is bound by residues arginine 49 and threonine 50. Lysine 77 contacts L-aspartate. 3 residues coordinate carbamoyl phosphate: arginine 99, histidine 127, and glutamine 130. 2 residues coordinate L-aspartate: arginine 160 and arginine 211. Carbamoyl phosphate-binding residues include alanine 250 and proline 251.

It belongs to the aspartate/ornithine carbamoyltransferase superfamily. ATCase family. In terms of assembly, heterododecamer (2C3:3R2) of six catalytic PyrB chains organized as two trimers (C3), and six regulatory PyrI chains organized as three dimers (R2).

It carries out the reaction carbamoyl phosphate + L-aspartate = N-carbamoyl-L-aspartate + phosphate + H(+). Its pathway is pyrimidine metabolism; UMP biosynthesis via de novo pathway; (S)-dihydroorotate from bicarbonate: step 2/3. Its function is as follows. Catalyzes the condensation of carbamoyl phosphate and aspartate to form carbamoyl aspartate and inorganic phosphate, the committed step in the de novo pyrimidine nucleotide biosynthesis pathway. This is Aspartate carbamoyltransferase catalytic subunit from Bacillus licheniformis (strain ATCC 14580 / DSM 13 / JCM 2505 / CCUG 7422 / NBRC 12200 / NCIMB 9375 / NCTC 10341 / NRRL NRS-1264 / Gibson 46).